The chain runs to 340 residues: Ketol-acid reductoisomerase (NADP(+)) (340 aa).

Residues 2–181 (AKVFYNGDIN…GSARAGVIET (180 aa)) enclose the KARI N-terminal Rossmann domain. Residues 25 to 28 (YGSQ), arginine 48, serine 52, and 82 to 85 (DEHQ) contribute to the NADP(+) site. Residue histidine 107 is part of the active site. An NADP(+)-binding site is contributed by glycine 133. In terms of domain architecture, KARI C-terminal knotted spans 182 to 327 (TFQEETETDL…RELREMMPFV (146 aa)). Positions 190, 194, 226, and 230 each coordinate Mg(2+). Serine 251 provides a ligand contact to substrate.

It belongs to the ketol-acid reductoisomerase family. Mg(2+) is required as a cofactor.

The catalysed reaction is (2R)-2,3-dihydroxy-3-methylbutanoate + NADP(+) = (2S)-2-acetolactate + NADPH + H(+). It carries out the reaction (2R,3R)-2,3-dihydroxy-3-methylpentanoate + NADP(+) = (S)-2-ethyl-2-hydroxy-3-oxobutanoate + NADPH + H(+). Its pathway is amino-acid biosynthesis; L-isoleucine biosynthesis; L-isoleucine from 2-oxobutanoate: step 2/4. The protein operates within amino-acid biosynthesis; L-valine biosynthesis; L-valine from pyruvate: step 2/4. In terms of biological role, involved in the biosynthesis of branched-chain amino acids (BCAA). Catalyzes an alkyl-migration followed by a ketol-acid reduction of (S)-2-acetolactate (S2AL) to yield (R)-2,3-dihydroxy-isovalerate. In the isomerase reaction, S2AL is rearranged via a Mg-dependent methyl migration to produce 3-hydroxy-3-methyl-2-ketobutyrate (HMKB). In the reductase reaction, this 2-ketoacid undergoes a metal-dependent reduction by NADPH to yield (R)-2,3-dihydroxy-isovalerate. The sequence is that of Ketol-acid reductoisomerase (NADP(+)) from Halalkalibacterium halodurans (strain ATCC BAA-125 / DSM 18197 / FERM 7344 / JCM 9153 / C-125) (Bacillus halodurans).